The following is a 381-amino-acid chain: Succinyl-diaminopimelate desuccinylase (381 aa).

A Zn(2+)-binding site is contributed by H68. The active site involves D70. D101 lines the Zn(2+) pocket. E135 acts as the Proton acceptor in catalysis. The Zn(2+) site is built by E136, E164, and H350.

It belongs to the peptidase M20A family. DapE subfamily. Homodimer. Zn(2+) is required as a cofactor. The cofactor is Co(2+).

It catalyses the reaction N-succinyl-(2S,6S)-2,6-diaminopimelate + H2O = (2S,6S)-2,6-diaminopimelate + succinate. The protein operates within amino-acid biosynthesis; L-lysine biosynthesis via DAP pathway; LL-2,6-diaminopimelate from (S)-tetrahydrodipicolinate (succinylase route): step 3/3. Catalyzes the hydrolysis of N-succinyl-L,L-diaminopimelic acid (SDAP), forming succinate and LL-2,6-diaminopimelate (DAP), an intermediate involved in the bacterial biosynthesis of lysine and meso-diaminopimelic acid, an essential component of bacterial cell walls. The protein is Succinyl-diaminopimelate desuccinylase of Neisseria gonorrhoeae (strain ATCC 700825 / FA 1090).